The primary structure comprises 390 residues: 2-oxoisovalerate dehydrogenase subunit beta, mitochondrial (390 aa).

A mitochondrion-targeting transit peptide spans 1 to 48 (MAAVAARAGGLLRLGAAGAERRRRGLRCAALVQGFLQPAVDDASQKRR). Y150 provides a ligand contact to thiamine diphosphate. G176, L178, T179, C226, and D229 together coordinate K(+). K230 carries the post-translational modification N6-acetyllysine. Residue N231 coordinates K(+). The residue at position 239 (K239) is an N6-acetyllysine.

As to quaternary structure, heterotetramer of 2 alpha/BCKDHA and 2 beta chains/BCKDHB that forms the branched-chain alpha-keto acid decarboxylase (E1) component of the BCKD complex. The branched-chain alpha-ketoacid dehydrogenase is a large complex composed of three major building blocks E1, E2 and E3. It is organized around E2, a 24-meric cubic core composed of DBT, to which are associated 6 to 12 copies of E1, and approximately 6 copies of the dehydrogenase E3, a DLD dimer. Thiamine diphosphate serves as cofactor.

It localises to the mitochondrion matrix. The catalysed reaction is N(6)-[(R)-lipoyl]-L-lysyl-[protein] + 3-methyl-2-oxobutanoate + H(+) = N(6)-[(R)-S(8)-2-methylpropanoyldihydrolipoyl]-L-lysyl-[protein] + CO2. Together with BCKDHA forms the heterotetrameric E1 subunit of the mitochondrial branched-chain alpha-ketoacid dehydrogenase (BCKD) complex. The BCKD complex catalyzes the multi-step oxidative decarboxylation of alpha-ketoacids derived from the branched-chain amino-acids valine, leucine and isoleucine producing CO2 and acyl-CoA which is subsequently utilized to produce energy. The E1 subunit catalyzes the first step with the decarboxylation of the alpha-ketoacid forming an enzyme-product intermediate. A reductive acylation mediated by the lipoylamide cofactor of E2 extracts the acyl group from the E1 active site for the next step of the reaction. The protein is 2-oxoisovalerate dehydrogenase subunit beta, mitochondrial of Rattus norvegicus (Rat).